We begin with the raw amino-acid sequence, 318 residues long: MAKSSKVSIVGAGGNVGSIVAYSVAMQGLAHEVILVDRDKDRAQGKALDMNQAAAAMRTHSIVRAANDYTDIEGSKVVVITAGFPRKPGMSRDDLLFANADIVSEVVENVVKHAPDSIIIVVTNPLDTMTYVALKKSGFPKNRVIGMAGILDGARMTHFIYEKLGFGAGQIRATVIGGHGDYMVPLPRYSTVAGIPITDLLTPQELQEVVEATKNGGAQIVKLMGTSAYFAPGKATAIMVEAILQDSKKIYPCSTLLEGEYGVHGIPNGVPVTLGANGVEEIIELQLTPREREEFQRSVDSVKELIDVLENQNYFGEK.

Residues 11 to 17 (GAGGNVG) and D37 each bind NAD(+). R86 and R92 together coordinate substrate. NAD(+) contacts are provided by residues N99 and 122–124 (VTN). Residues N124 and R155 each coordinate substrate. The active-site Proton acceptor is the H179.

It belongs to the LDH/MDH superfamily. MDH type 3 family.

It catalyses the reaction (S)-malate + NAD(+) = oxaloacetate + NADH + H(+). Catalyzes the reversible oxidation of malate to oxaloacetate. This is Malate dehydrogenase from Nitratiruptor sp. (strain SB155-2).